Here is a 615-residue protein sequence, read N- to C-terminus: Probable ATP-citrate synthase subunit 1 (615 aa).

ATP-binding positions include 221–241 and 272–298; these read LIRF…EVGG and FKTE…KNQA. Glu-238 contributes to the Mg(2+) binding site. His-280 serves as the catalytic Tele-phosphohistidine intermediate. Position 299-309 (299-309) interacts with CoA; that stretch reads MREAGIYVPET. At Ser-359 the chain carries Phosphoserine.

It belongs to the succinate/malate CoA ligase alpha subunit family. In terms of assembly, composed of two subunits.

The protein resides in the cytoplasm. It catalyses the reaction oxaloacetate + acetyl-CoA + ADP + phosphate = citrate + ATP + CoA. In terms of biological role, catalyzes the formation of cytosolic acetyl-CoA, which is mainly used for the biosynthesis of fatty acids and sterols. This is Probable ATP-citrate synthase subunit 1 from Schizosaccharomyces pombe (strain 972 / ATCC 24843) (Fission yeast).